The following is a 398-amino-acid chain: Cholinephosphotransferase 1 (398 aa).

A2 is subject to N-acetylalanine. The Cytoplasmic segment spans residues 2 to 62; sequence AAGAGARPAP…LLQWIPLWIA (61 aa). Residues 63-83 traverse the membrane as a helical segment; sequence PNTITLFGLAINLFTTLVLIF. CDP-choline is bound at residue N64. Over 84–93 the chain is Lumenal; sequence YCPTVTEEAP. Residues 94–118 traverse the membrane as a helical segment; sequence YWTYLLCALGLFIYQSLDAIDGKQA. Mg(2+) contacts are provided by D111 and D114. A CDP-choline-binding site is contributed by R119. Topologically, residues 119 to 125 are cytoplasmic; that stretch reads RRTNSCS. The chain crosses the membrane as a helical span at residues 126–150; the sequence is PLGELFDHGCDSLSTVFMAIGASIA. D132 provides a ligand contact to Mg(2+). H133 serves as the catalytic Proton acceptor. Residue D136 coordinates Mg(2+). The Lumenal portion of the chain corresponds to 151 to 160; that stretch reads VRLGTHPDWL. A helical membrane pass occupies residues 161–179; that stretch reads FFCSFVGMFMFYCAHWQTY. Residues 180–190 are Cytoplasmic-facing; sequence VSGVLRFGRVD. Residues 191–207 traverse the membrane as a helical segment; it reads VTEIQVALVIVFLLSTF. Residues 208–222 are Lumenal-facing; the sequence is GGAMMWDYTIPILEI. The helical transmembrane segment at 223-248 threads the bilayer; the sequence is KLKILPVLGVVGGLIFSCSNYFHVIL. The Cytoplasmic segment spans residues 249–265; the sequence is HGGVGKNGSTIAGTSVL. The chain crosses the membrane as a helical span at residues 266 to 281; it reads SPGLHIGLIIILAIMI. The Lumenal portion of the chain corresponds to 282 to 293; the sequence is YKKSATNVFEKH. A helical membrane pass occupies residues 294-316; that stretch reads PCLYTLMFGCVFAKVAQKLVIAH. At 317–329 the chain is on the cytoplasmic side; it reads MTKSELYLQDTVF. Residues 330-339 traverse the membrane as a helical segment; sequence IGPGLLFLDQ. Topologically, residues 340–346 are lumenal; the sequence is YFNNFID. Residues 347-376 form a helical membrane-spanning segment; the sequence is EYVVLWIAMVITSFDMMIYFSSLCLQISRH. Over 377 to 398 the chain is Cytoplasmic; it reads LHLSIFKTSYQQAPEQVHKHID.

This sequence belongs to the CDP-alcohol phosphatidyltransferase class-I family. Requires Mg(2+) as cofactor. Mn(2+) is required as a cofactor.

It localises to the golgi apparatus membrane. The enzyme catalyses CDP-choline + a 1,2-diacyl-sn-glycerol = a 1,2-diacyl-sn-glycero-3-phosphocholine + CMP + H(+). It catalyses the reaction 1-octadecanoyl-2-(5Z,8Z,11Z,14Z-eicosatetraenoyl)-sn-glycerol + CDP-choline = 1-octadecanoyl-2-(5Z,8Z,11Z,14Z-eicosatetraenoyl)-sn-glycero-3-phosphocholine + CMP + H(+). The catalysed reaction is 1-hexadecanoyl-2-(9Z-octadecenoyl)-sn-glycerol + CDP-choline = 1-hexadecanoyl-2-(9Z-octadecenoyl)-sn-glycero-3-phosphocholine + CMP + H(+). It carries out the reaction 1-hexadecanoyl-2-(4Z,7Z,10Z,13Z,16Z,19Z-docosahexaenoyl)-sn-glycerol + CDP-choline = 1-hexadecanoyl-2-(4Z,7Z,10Z,13Z,16Z,19Z-docosahexaenoyl)-sn-glycero-3-phosphocholine + CMP + H(+). The enzyme catalyses 1,2-dioctanoyl-sn-glycerol + CDP-choline = 1,2-dioctanoyl-sn-glycero-3-phosphocholine + CMP + H(+). The protein operates within phospholipid metabolism; phosphatidylcholine biosynthesis; phosphatidylcholine from phosphocholine: step 2/2. Its function is as follows. Catalyzes the final step of de novo phosphatidylcholine (PC) synthesis, i.e. the transfer of choline phosphate from CDP-choline to the free hydroxyl of a diacylglycerol (DAG), producing a PC. It thereby plays a central role in the formation and maintenance of vesicular membranes. The protein is Cholinephosphotransferase 1 of Rattus norvegicus (Rat).